The chain runs to 381 residues: Homoserine O-succinyltransferase (381 aa).

The region spanning 45–360 (NAVLVCHALN…PHGHDAFLLD (316 aa)) is the AB hydrolase-1 domain. Residue Ser-151 is the Nucleophile of the active site. Substrate is bound at residue Arg-221. Catalysis depends on residues Asp-321 and His-354. Substrate is bound at residue Asp-355.

The protein belongs to the AB hydrolase superfamily. MetX family. As to quaternary structure, homodimer.

Its subcellular location is the cytoplasm. It catalyses the reaction L-homoserine + succinyl-CoA = O-succinyl-L-homoserine + CoA. The protein operates within amino-acid biosynthesis; L-methionine biosynthesis via de novo pathway; O-succinyl-L-homoserine from L-homoserine: step 1/1. Transfers a succinyl group from succinyl-CoA to L-homoserine, forming succinyl-L-homoserine. The sequence is that of Homoserine O-succinyltransferase from Burkholderia cenocepacia (strain ATCC BAA-245 / DSM 16553 / LMG 16656 / NCTC 13227 / J2315 / CF5610) (Burkholderia cepacia (strain J2315)).